The sequence spans 876 residues: Leucine--tRNA ligase (876 aa).

The 'HIGH' region signature appears at 42 to 52; that stretch reads PYPSGKLHMGH. Residues 634–638 carry the 'KMSKS' region motif; it reads KMSKS. An ATP-binding site is contributed by K637.

It belongs to the class-I aminoacyl-tRNA synthetase family.

The protein resides in the cytoplasm. It catalyses the reaction tRNA(Leu) + L-leucine + ATP = L-leucyl-tRNA(Leu) + AMP + diphosphate. The sequence is that of Leucine--tRNA ligase from Neisseria gonorrhoeae (strain ATCC 700825 / FA 1090).